We begin with the raw amino-acid sequence, 287 residues long: Small ribosomal subunit protein uS2 (287 aa).

Residues 233–287 (HKAPQDDIEPMAEWEKQLLQSGDSSGETRPISGTDRPLDGDLSKGPAPQDEELSD) form a disordered region. Residues 250-259 (LLQSGDSSGE) are compositionally biased toward polar residues.

It belongs to the universal ribosomal protein uS2 family.

The chain is Small ribosomal subunit protein uS2 from Tropheryma whipplei (strain TW08/27) (Whipple's bacillus).